A 714-amino-acid polypeptide reads, in one-letter code: Epithelial splicing regulatory protein 1 (714 aa).

3 RRM domains span residues 225–302 (TVIR…KATG), 326–406 (IIVR…KSTA), and 450–530 (DCVR…ACSA).

Belongs to the ESRP family.

It localises to the nucleus. In terms of biological role, mRNA splicing factor that regulates the formation of epithelial cell-specific isoforms. Specifically regulates the expression of FGFR2-IIIb, an epithelial cell-specific isoform of fgfr2. Acts by directly binding specific sequences in mRNAs. Binds the GU-rich sequence motifs in the ISE/ISS-3, a cis-element regulatory region present in the mRNA of fgfr2. The protein is Epithelial splicing regulatory protein 1 (esrp1) of Danio rerio (Zebrafish).